Reading from the N-terminus, the 208-residue chain is Cysteine-rich protein 2 (208 aa).

The region spanning 5-57 (CPKCDKTVYFAEKVSSLGKDWHKFCLKCERCNKTLTPGGHAEHDGKPFCHKPC) is the LIM zinc-binding 1 domain. Lys23 bears the N6-acetyllysine mark. A Phosphoserine modification is found at Ser104. Residues 126-178 (CPRCNKRVYFAEKVTSLGKDWHRPCLRCERCSKTLTPGGHAEHDGQPYCHKPC) enclose the LIM zinc-binding 2 domain. 2 positions are modified to N6-acetyllysine: Lys138 and Lys144.

Interacts with TGFB1I1. As to expression, expressed more abundantly in liver and kidney of females than that of males. Equally expressed in brain, lung and heart.

This is Cysteine-rich protein 2 (Crip2) from Rattus norvegicus (Rat).